A 39-amino-acid chain; its full sequence is Photosystem II reaction center protein J (39 aa).

A helical membrane pass occupies residues 9–29 (LWIIATFGGIAALTVVGLFIY).

Belongs to the PsbJ family. As to quaternary structure, PSII is composed of 1 copy each of membrane proteins PsbA, PsbB, PsbC, PsbD, PsbE, PsbF, PsbH, PsbI, PsbJ, PsbK, PsbL, PsbM, PsbT, PsbX, PsbY, PsbZ, Psb30/Ycf12, at least 3 peripheral proteins of the oxygen-evolving complex and a large number of cofactors. It forms dimeric complexes.

Its subcellular location is the plastid. The protein localises to the chloroplast thylakoid membrane. Functionally, one of the components of the core complex of photosystem II (PSII). PSII is a light-driven water:plastoquinone oxidoreductase that uses light energy to abstract electrons from H(2)O, generating O(2) and a proton gradient subsequently used for ATP formation. It consists of a core antenna complex that captures photons, and an electron transfer chain that converts photonic excitation into a charge separation. This chain is Photosystem II reaction center protein J, found in Guillardia theta (Cryptophyte).